We begin with the raw amino-acid sequence, 414 residues long: Ribulose bisphosphate carboxylase large chain (414 aa).

Substrate contacts are provided by N101 and T151. K153 serves as the catalytic Proton acceptor. K155 contributes to the substrate binding site. Mg(2+)-binding residues include K179, D181, and E182. K179 bears the N6-carboxylysine mark. H272 acts as the Proton acceptor in catalysis. Substrate is bound by residues R273, H305, and S357.

The protein belongs to the RuBisCO large chain family. Type I subfamily. Heterohexadecamer of 8 large chains and 8 small chains; disulfide-linked. The disulfide link is formed within the large subunit homodimers. Requires Mg(2+) as cofactor. Post-translationally, the disulfide bond which can form in the large chain dimeric partners within the hexadecamer appears to be associated with oxidative stress and protein turnover.

The protein resides in the plastid. Its subcellular location is the chloroplast. It catalyses the reaction 2 (2R)-3-phosphoglycerate + 2 H(+) = D-ribulose 1,5-bisphosphate + CO2 + H2O. The catalysed reaction is D-ribulose 1,5-bisphosphate + O2 = 2-phosphoglycolate + (2R)-3-phosphoglycerate + 2 H(+). Its function is as follows. RuBisCO catalyzes two reactions: the carboxylation of D-ribulose 1,5-bisphosphate, the primary event in carbon dioxide fixation, as well as the oxidative fragmentation of the pentose substrate in the photorespiration process. Both reactions occur simultaneously and in competition at the same active site. The polypeptide is Ribulose bisphosphate carboxylase large chain (rbcL) (Onychium japonicum (Japanese claw fern)).